The sequence spans 33 residues: Photosystem II reaction center protein Psb30 (33 aa).

A helical transmembrane segment spans residues Ile-5–Leu-25.

It belongs to the Psb30/Ycf12 family. PSII is composed of 1 copy each of membrane proteins PsbA, PsbB, PsbC, PsbD, PsbE, PsbF, PsbH, PsbI, PsbJ, PsbK, PsbL, PsbM, PsbT, PsbX, PsbY, PsbZ, Psb30/Ycf12, peripheral proteins of the oxygen-evolving complex and a large number of cofactors. It forms dimeric complexes.

The protein localises to the plastid. It localises to the chloroplast thylakoid membrane. In terms of biological role, a core subunit of photosystem II (PSII), probably helps stabilize the reaction center. This Angiopteris evecta (Mule's foot fern) protein is Photosystem II reaction center protein Psb30.